We begin with the raw amino-acid sequence, 597 residues long: Membrane protein insertase YidC (597 aa).

Residues 8–28 form a helical membrane-spanning segment; that stretch reads YFVAIALSVLILIAWQFFYVS. The segment at 38–75 is disordered; the sequence is AEKAQQAQSQPGTQQAAPGQAAPGQALPGGAIPSAAES. Low complexity predominate over residues 41–70; that stretch reads AQQAQSQPGTQQAAPGQAAPGQALPGGAIP. The next 4 helical transmembrane spans lie at 372–392, 446–466, 491–511, and 535–555; these read LFGNFGIAILITTIVVKLIFF, WPILIQIPVFFALYKVIYVTI, LFGLLPFEGPAFLHLGIWPIV, and FTWMPVVFTFMLASFPAGLVI.

It belongs to the OXA1/ALB3/YidC family. Type 1 subfamily. In terms of assembly, interacts with the Sec translocase complex via SecD. Specifically interacts with transmembrane segments of nascent integral membrane proteins during membrane integration.

The protein localises to the cell inner membrane. Functionally, required for the insertion and/or proper folding and/or complex formation of integral membrane proteins into the membrane. Involved in integration of membrane proteins that insert both dependently and independently of the Sec translocase complex, as well as at least some lipoproteins. Aids folding of multispanning membrane proteins. This is Membrane protein insertase YidC from Sinorhizobium medicae (strain WSM419) (Ensifer medicae).